Reading from the N-terminus, the 238-residue chain is LexA repressor (238 aa).

The segment at residues 26-46 is a DNA-binding region (H-T-H motif); the sequence is FDEMKDALDLASKSGIHRLIT. Residues S158 and K196 each act as for autocatalytic cleavage activity in the active site.

The protein belongs to the peptidase S24 family. As to quaternary structure, homodimer.

It carries out the reaction Hydrolysis of Ala-|-Gly bond in repressor LexA.. Represses a number of genes involved in the response to DNA damage (SOS response), including recA and lexA. In the presence of single-stranded DNA, RecA interacts with LexA causing an autocatalytic cleavage which disrupts the DNA-binding part of LexA, leading to derepression of the SOS regulon and eventually DNA repair. In Rhizobium meliloti (strain 1021) (Ensifer meliloti), this protein is LexA repressor.